The chain runs to 154 residues: Ribosome maturation factor RimP (154 aa).

Belongs to the RimP family.

The protein resides in the cytoplasm. Its function is as follows. Required for maturation of 30S ribosomal subunits. The sequence is that of Ribosome maturation factor RimP from Ruthia magnifica subsp. Calyptogena magnifica.